Consider the following 527-residue polypeptide: Glutamate--cysteine ligase (527 aa).

This sequence belongs to the glutamate--cysteine ligase type 1 family. Type 1 subfamily.

The catalysed reaction is L-cysteine + L-glutamate + ATP = gamma-L-glutamyl-L-cysteine + ADP + phosphate + H(+). The protein operates within sulfur metabolism; glutathione biosynthesis; glutathione from L-cysteine and L-glutamate: step 1/2. This Pseudomonas aeruginosa (strain ATCC 15692 / DSM 22644 / CIP 104116 / JCM 14847 / LMG 12228 / 1C / PRS 101 / PAO1) protein is Glutamate--cysteine ligase.